We begin with the raw amino-acid sequence, 201 residues long: Transcription factor MYB82 (201 aa).

HTH myb-type domains lie at 9–61 (KSYV…KNYL) and 62–116 (RPNI…NKKP). DNA-binding regions (H-T-H motif) lie at residues 37–61 (WADI…KNYL) and 89–112 (WSLI…NTHL). The interval 112 to 133 (LNKKPNSRRQNAPESIVGATPF) is disordered.

As to quaternary structure, homodimer and heterodimer with GL1. Part of the WD40-bHLH-MYB complex. Interacts with BHLH012/MYC1 and BHLH042/TT8. Interacts (via N-terminus) with GL1 and GL3. In terms of tissue distribution, mainly expressed in the trichomes of new leaves.

The protein localises to the nucleus. Transcription activation factor positively regulating trichomes development. Has a function nearly equivalent to that of GL1 and can complement gl1 mutants. In Arabidopsis thaliana (Mouse-ear cress), this protein is Transcription factor MYB82 (MYB82).